The following is a 321-amino-acid chain: Ribose-phosphate pyrophosphokinase (321 aa).

ATP contacts are provided by residues 44-46 and 103-104; these read DGE and RQ. The Mg(2+) site is built by His-137 and Asp-179. Lys-202 is a catalytic residue. Residues Arg-204, Asp-228, and 232-236 contribute to the D-ribose 5-phosphate site; that span reads DTAGT.

Belongs to the ribose-phosphate pyrophosphokinase family. Class I subfamily. As to quaternary structure, homohexamer. The cofactor is Mg(2+).

The protein resides in the cytoplasm. It catalyses the reaction D-ribose 5-phosphate + ATP = 5-phospho-alpha-D-ribose 1-diphosphate + AMP + H(+). The protein operates within metabolic intermediate biosynthesis; 5-phospho-alpha-D-ribose 1-diphosphate biosynthesis; 5-phospho-alpha-D-ribose 1-diphosphate from D-ribose 5-phosphate (route I): step 1/1. Involved in the biosynthesis of the central metabolite phospho-alpha-D-ribosyl-1-pyrophosphate (PRPP) via the transfer of pyrophosphoryl group from ATP to 1-hydroxyl of ribose-5-phosphate (Rib-5-P). This is Ribose-phosphate pyrophosphokinase from Staphylococcus saprophyticus subsp. saprophyticus (strain ATCC 15305 / DSM 20229 / NCIMB 8711 / NCTC 7292 / S-41).